We begin with the raw amino-acid sequence, 71 residues long: uncharacterized protein (71 aa).

Residues 23-71 form a disordered region; it reads ENEKAGQSEEYDDDDKEENKKRRRNNGRRGPPEKKKSRRGGEEQTQRII. Residues 52-71 show a composition bias toward basic and acidic residues; sequence GPPEKKKSRRGGEEQTQRII.

This is an uncharacterized protein from Caenorhabditis elegans.